A 439-amino-acid chain; its full sequence is Glutamate-1-semialdehyde 2,1-aminomutase (439 aa).

An N6-(pyridoxal phosphate)lysine modification is found at Lys279.

This sequence belongs to the class-III pyridoxal-phosphate-dependent aminotransferase family. HemL subfamily. Homodimer. It depends on pyridoxal 5'-phosphate as a cofactor.

The protein resides in the cytoplasm. It carries out the reaction (S)-4-amino-5-oxopentanoate = 5-aminolevulinate. Its pathway is porphyrin-containing compound metabolism; protoporphyrin-IX biosynthesis; 5-aminolevulinate from L-glutamyl-tRNA(Glu): step 2/2. This chain is Glutamate-1-semialdehyde 2,1-aminomutase, found in Rhodopirellula baltica (strain DSM 10527 / NCIMB 13988 / SH1).